We begin with the raw amino-acid sequence, 338 residues long: 3-dehydroquinate synthase (338 aa).

Residues 58–63, 92–96, 116–117, lysine 129, and lysine 138 contribute to the NAD(+) site; these read DGERAK, GTTGD, and TT. Residues glutamate 169, histidine 229, and histidine 245 each coordinate Zn(2+).

This sequence belongs to the sugar phosphate cyclases superfamily. Dehydroquinate synthase family. Requires NAD(+) as cofactor. It depends on Co(2+) as a cofactor. Zn(2+) is required as a cofactor.

It is found in the cytoplasm. The catalysed reaction is 7-phospho-2-dehydro-3-deoxy-D-arabino-heptonate = 3-dehydroquinate + phosphate. It participates in metabolic intermediate biosynthesis; chorismate biosynthesis; chorismate from D-erythrose 4-phosphate and phosphoenolpyruvate: step 2/7. Functionally, catalyzes the conversion of 3-deoxy-D-arabino-heptulosonate 7-phosphate (DAHP) to dehydroquinate (DHQ). In Picrophilus torridus (strain ATCC 700027 / DSM 9790 / JCM 10055 / NBRC 100828 / KAW 2/3), this protein is 3-dehydroquinate synthase.